The following is a 553-amino-acid chain: Effector protein HopAB2 (553 aa).

Disordered regions lie at residues 1-123 (MAGI…APRR), 198-227 (AVHQ…GSSQ), and 239-275 (APNQ…AAMR). Positions 1-308 (MAGINRAGPS…LRTALERHVM (308 aa)) are host recognition; Pto interaction. The segment covering 24–39 (SGQAHGSGSGASSSNS) has biased composition (low complexity). Over residues 47–60 (SNTPPSNAPAPPPT) the composition is skewed to pro residues. Positions 217 to 227 (SPAASSSGSSQ) are enriched in low complexity. Residues 242-255 (QGRSSNTAASQTPV) are compositionally biased toward polar residues. The tract at residues 309 to 553 (QRLPIPLDIG…IAKYAFRIVP (245 aa)) is E3 ubiquitin-protein ligase. Residues 325–328 (GINP) carry the Interaction with Pto-kinase motif. A disordered region spans residues 361-380 (APRPAVPVAPATASRRPDGT). A required for E3 ubiquitin-protein ligase and anti-PCD activities and pathogenesis region spans residues 512 to 529 (KDLAFMDMKKLAQFLAGK).

The protein belongs to the HopAB family. Interacts physically with plant cell Pto. In terms of processing, auto-ubiquitinated.

The protein resides in the secreted. Functionally, effector protein involved in gene-for-gene resistance in tomato plants. It is recognized by the host Pto resistance protein and elicits Pto and Prf-dependent hypersensitive response (HR) and programmed cell death (PCD), resulting in host immunity. In susceptible plants, acts as a virulence factor by suppressing PCD and HR-based plant immunity. This function requires its E3 ubiquitin ligase activity probably by recruiting E2 enzymes and transferring ubiquitin molecules to cellular proteins involved in regulation of PCD and targeting them for degradation. Also, induces expression of host genes involved in ethylene biosynthesis and signaling, in particular ACO1 and ACO2, encoding the ethylene-forming enzyme ACC oxidase. This Pseudomonas syringae pv. tomato (strain ATCC BAA-871 / DC3000) protein is Effector protein HopAB2 (hopAB2).